A 345-amino-acid polypeptide reads, in one-letter code: Phenylalanine--tRNA ligase alpha subunit (345 aa).

Glu272 contacts Mg(2+).

This sequence belongs to the class-II aminoacyl-tRNA synthetase family. Phe-tRNA synthetase alpha subunit type 1 subfamily. Tetramer of two alpha and two beta subunits. Requires Mg(2+) as cofactor.

The protein resides in the cytoplasm. It carries out the reaction tRNA(Phe) + L-phenylalanine + ATP = L-phenylalanyl-tRNA(Phe) + AMP + diphosphate + H(+). This Prochlorococcus marinus (strain MIT 9312) protein is Phenylalanine--tRNA ligase alpha subunit.